A 391-amino-acid polypeptide reads, in one-letter code: Thioredoxin-interacting protein (391 aa).

Lys-212 participates in a covalent cross-link: Glycyl lysine isopeptide (Lys-Gly) (interchain with G-Cter in ubiquitin). A Phosphoserine modification is found at Ser-361.

Belongs to the arrestin family. Homodimer; disulfide-linked. Interacts with TXN/thioredoxin through its redox-active site. Interacts with transcriptional repressors ZBTB16, ZBTB32 and HDAC1. Interacts with DDIT4. In terms of processing, ubiquitinated; undergoes heterotypic 'Lys-48'-/'Lys-63'-branched polyubiquitination catalyzed by ITCH and UBR5 resulting in proteasomal degradation. Deubiquitinated by USP5, leading to TXNIP stabilization.

Its subcellular location is the cytoplasm. It localises to the nucleus. Its function is as follows. May act as an oxidative stress mediator by inhibiting thioredoxin activity or by limiting its bioavailability. Interacts with COPS5 and restores COPS5-induced suppression of CDKN1B stability, blocking the COPS5-mediated translocation of CDKN1B from the nucleus to the cytoplasm. Functions as a transcriptional repressor, possibly by acting as a bridge molecule between transcription factors and corepressor complexes, and over-expression will induce G0/G1 cell cycle arrest. Required for the maturation of natural killer cells. Acts as a suppressor of tumor cell growth. Inhibits the proteasomal degradation of DDIT4, and thereby contributes to the inhibition of the mammalian target of rapamycin complex 1 (mTORC1). In Homo sapiens (Human), this protein is Thioredoxin-interacting protein (TXNIP).